The following is a 199-amino-acid chain: Oleosin 21.2 kDa (199 aa).

Basic and acidic residues predominate over residues 1–14 (MADTHRVDRTDRHF). The disordered stretch occupies residues 1–31 (MADTHRVDRTDRHFQFQSPYEGGRGQGQYEG). At alanine 2 the chain carries N-acetylalanine. The interval 2–56 (ADTHRVDRTDRHFQFQSPYEGGRGQGQYEGDRGYGGGGYKSMMPESGPSSTQVLS) is polar. The span at 22 to 31 (GGRGQGQYEG) shows a compositional bias: gly residues. The next 3 membrane-spanning stretches (helical) occupy residues 51 to 71 (STQVLSLLIGVPVVGSLLALA), 72 to 92 (GLLLAGSVIGLMVALPLFLLF), and 96 to 116 (IVPAALTIGLAMTGFLASGMF). A hydrophobic region spans residues 57-128 (LLIGVPVVGS…TGLSSISWVM (72 aa)). Residues 159–199 (KGKEMGQHVQNKAQDVKQYDISKPHDTTTKGHETQGRTTAA) form a disordered region. Over residues 172-193 (QDVKQYDISKPHDTTTKGHETQ) the composition is skewed to basic and acidic residues.

It belongs to the oleosin family.

It localises to the lipid droplet. The protein localises to the membrane. Functionally, may have a structural role to stabilize the lipid body during desiccation of the seed by preventing coalescence of the oil. Probably interacts with both lipid and phospholipid moieties of lipid bodies. May also provide recognition signals for specific lipase anchorage in lipolysis during seedling growth. This is Oleosin 21.2 kDa from Arabidopsis thaliana (Mouse-ear cress).